A 1486-amino-acid polypeptide reads, in one-letter code: Glutamate synthase [NADPH] large chain (1486 aa).

Residues 1 to 11 constitute a propeptide that is removed on maturation; that stretch reads MLYDKSLERDN. The active-site Nucleophile is Cys12. Residues 12–402 enclose the Glutamine amidotransferase type-2 domain; that stretch reads CGFGLIAHIE…PGELMVIDTR (391 aa). 1049–1101 is an FMN binding site; sequence LVETQQALVANGLRHKIRLQVDGGLKTGVDIIKAAILGAESFGFGTGPMVALG. [3Fe-4S] cluster is bound by residues Cys1102, Cys1108, and Cys1113.

The protein belongs to the glutamate synthase family. Aggregate of 4 catalytic active heterodimers, consisting of a large and a small subunit. The cofactor is [3Fe-4S] cluster. It depends on FAD as a cofactor. Requires FMN as cofactor.

The enzyme catalyses 2 L-glutamate + NADP(+) = L-glutamine + 2-oxoglutarate + NADPH + H(+). Its pathway is amino-acid biosynthesis; L-glutamate biosynthesis via GLT pathway; L-glutamate from 2-oxoglutarate and L-glutamine (NADP(+) route): step 1/1. The protein operates within energy metabolism; nitrogen metabolism. Catalyzes the conversion of L-glutamine and 2-oxoglutarate into two molecules of L-glutamate. The polypeptide is Glutamate synthase [NADPH] large chain (gltB) (Escherichia coli (strain K12)).